Consider the following 132-residue polypeptide: Large ribosomal subunit protein uL14 (132 aa).

This sequence belongs to the universal ribosomal protein uL14 family. In terms of assembly, part of the 50S ribosomal subunit. Forms a cluster with proteins L3 and L24e, part of which may contact the 16S rRNA in 2 intersubunit bridges.

Its function is as follows. Binds to 23S rRNA. Forms part of two intersubunit bridges in the 70S ribosome. The sequence is that of Large ribosomal subunit protein uL14 from Picrophilus torridus (strain ATCC 700027 / DSM 9790 / JCM 10055 / NBRC 100828 / KAW 2/3).